Consider the following 120-residue polypeptide: Large ribosomal subunit protein uL18 (120 aa).

It belongs to the universal ribosomal protein uL18 family. As to quaternary structure, part of the 50S ribosomal subunit; part of the 5S rRNA/L5/L18/L25 subcomplex. Contacts the 5S and 23S rRNAs.

Functionally, this is one of the proteins that bind and probably mediate the attachment of the 5S RNA into the large ribosomal subunit, where it forms part of the central protuberance. This chain is Large ribosomal subunit protein uL18, found in Sinorhizobium medicae (strain WSM419) (Ensifer medicae).